A 251-amino-acid chain; its full sequence is Aspartate/glutamate leucyltransferase (251 aa).

Belongs to the R-transferase family. Bpt subfamily.

Its subcellular location is the cytoplasm. The enzyme catalyses N-terminal L-glutamyl-[protein] + L-leucyl-tRNA(Leu) = N-terminal L-leucyl-L-glutamyl-[protein] + tRNA(Leu) + H(+). The catalysed reaction is N-terminal L-aspartyl-[protein] + L-leucyl-tRNA(Leu) = N-terminal L-leucyl-L-aspartyl-[protein] + tRNA(Leu) + H(+). Functions in the N-end rule pathway of protein degradation where it conjugates Leu from its aminoacyl-tRNA to the N-termini of proteins containing an N-terminal aspartate or glutamate. The sequence is that of Aspartate/glutamate leucyltransferase from Nitrosospira multiformis (strain ATCC 25196 / NCIMB 11849 / C 71).